Here is a 95-residue protein sequence, read N- to C-terminus: Co-chaperonin GroES (95 aa).

The protein belongs to the GroES chaperonin family. As to quaternary structure, heptamer of 7 subunits arranged in a ring. Interacts with the chaperonin GroEL.

The protein resides in the cytoplasm. In terms of biological role, together with the chaperonin GroEL, plays an essential role in assisting protein folding. The GroEL-GroES system forms a nano-cage that allows encapsulation of the non-native substrate proteins and provides a physical environment optimized to promote and accelerate protein folding. GroES binds to the apical surface of the GroEL ring, thereby capping the opening of the GroEL channel. The protein is Co-chaperonin GroES of Rhizorhabdus wittichii (strain DSM 6014 / CCUG 31198 / JCM 15750 / NBRC 105917 / EY 4224 / RW1) (Sphingomonas wittichii).